Consider the following 528-residue polypeptide: Peptide chain release factor 3 (528 aa).

Positions 10–279 constitute a tr-type G domain; it reads AKRRTFAIIS…GLVEWAPAPM (270 aa). GTP-binding positions include 19 to 26, 87 to 91, and 141 to 144; these read SHPDAGKT, DTPGH, and NKLD.

It belongs to the TRAFAC class translation factor GTPase superfamily. Classic translation factor GTPase family. PrfC subfamily.

The protein localises to the cytoplasm. In terms of biological role, increases the formation of ribosomal termination complexes and stimulates activities of RF-1 and RF-2. It binds guanine nucleotides and has strong preference for UGA stop codons. It may interact directly with the ribosome. The stimulation of RF-1 and RF-2 is significantly reduced by GTP and GDP, but not by GMP. The chain is Peptide chain release factor 3 from Escherichia coli O1:K1 / APEC.